Here is a 1551-residue protein sequence, read N- to C-terminus: Pentafunctional AROM polypeptide 2 (1551 aa).

The segment at Met1–Lys379 is 3-dehydroquinate synthase. NAD(+) contacts are provided by residues Asp42–Asn44, Glu80–Lys83, Gly111–Val113, and Asp116. Residue Arg127 participates in 7-phospho-2-dehydro-3-deoxy-D-arabino-heptonate binding. Thr136–Thr137 contributes to the NAD(+) binding site. 7-phospho-2-dehydro-3-deoxy-D-arabino-heptonate contacts are provided by Asp143 and Lys149. Residue Lys158 coordinates NAD(+). Asn159 contacts 7-phospho-2-dehydro-3-deoxy-D-arabino-heptonate. NAD(+)-binding positions include Phe176 to Thr179 and Asn187. Glu191 contacts Zn(2+). Residues Glu191–Lys194 and Lys243 each bind 7-phospho-2-dehydro-3-deoxy-D-arabino-heptonate. The active-site Proton acceptor; for 3-dehydroquinate synthase activity is the Glu253. 7-phospho-2-dehydro-3-deoxy-D-arabino-heptonate-binding positions include Arg257 to Asn261 and His264. His264 contributes to the Zn(2+) binding site. His268 functions as the Proton acceptor; for 3-dehydroquinate synthase activity in the catalytic mechanism. Residues His280 and Lys351 each coordinate 7-phospho-2-dehydro-3-deoxy-D-arabino-heptonate. Residue His280 participates in Zn(2+) binding. Residues Val392–Ala835 form an EPSP synthase region. Residues Asp854 to Thr1044 are shikimate kinase. Residue Gly861–Thr868 participates in ATP binding. Positions Leu1045–Glu1258 are 3-dehydroquinase. Catalysis depends on His1162, which acts as the Proton acceptor; for 3-dehydroquinate dehydratase activity. Lys1191 functions as the Schiff-base intermediate with substrate; for 3-dehydroquinate dehydratase activity in the catalytic mechanism. Residues Glu1271–Glu1551 form a shikimate dehydrogenase region.

It in the N-terminal section; belongs to the sugar phosphate cyclases superfamily. Dehydroquinate synthase family. This sequence in the 2nd section; belongs to the EPSP synthase family. In the 3rd section; belongs to the shikimate kinase family. The protein in the 4th section; belongs to the type-I 3-dehydroquinase family. It in the C-terminal section; belongs to the shikimate dehydrogenase family. As to quaternary structure, homodimer. Zn(2+) serves as cofactor.

The protein localises to the cytoplasm. The enzyme catalyses 7-phospho-2-dehydro-3-deoxy-D-arabino-heptonate = 3-dehydroquinate + phosphate. The catalysed reaction is 3-dehydroquinate = 3-dehydroshikimate + H2O. It carries out the reaction shikimate + NADP(+) = 3-dehydroshikimate + NADPH + H(+). It catalyses the reaction shikimate + ATP = 3-phosphoshikimate + ADP + H(+). The enzyme catalyses 3-phosphoshikimate + phosphoenolpyruvate = 5-O-(1-carboxyvinyl)-3-phosphoshikimate + phosphate. The protein operates within metabolic intermediate biosynthesis; chorismate biosynthesis; chorismate from D-erythrose 4-phosphate and phosphoenolpyruvate: step 2/7. Its pathway is metabolic intermediate biosynthesis; chorismate biosynthesis; chorismate from D-erythrose 4-phosphate and phosphoenolpyruvate: step 3/7. It functions in the pathway metabolic intermediate biosynthesis; chorismate biosynthesis; chorismate from D-erythrose 4-phosphate and phosphoenolpyruvate: step 4/7. It participates in metabolic intermediate biosynthesis; chorismate biosynthesis; chorismate from D-erythrose 4-phosphate and phosphoenolpyruvate: step 5/7. The protein operates within metabolic intermediate biosynthesis; chorismate biosynthesis; chorismate from D-erythrose 4-phosphate and phosphoenolpyruvate: step 6/7. Functionally, the AROM polypeptide catalyzes 5 consecutive enzymatic reactions in prechorismate polyaromatic amino acid biosynthesis. The protein is Pentafunctional AROM polypeptide 2 of Lodderomyces elongisporus (strain ATCC 11503 / CBS 2605 / JCM 1781 / NBRC 1676 / NRRL YB-4239) (Yeast).